A 427-amino-acid polypeptide reads, in one-letter code: UDP-N-acetyl-D-mannosamine dehydrogenase (427 aa).

NAD(+)-binding residues include Y20, I21, D40, R45, T92, and T130. UDP-N-acetyl-alpha-D-mannosaminouronate contacts are provided by R157, V158, K209, N213, R216, H247, R249, and G260. K209 functions as the Proton donor/acceptor in the catalytic mechanism. C263 serves as the catalytic Nucleophile. Residues Y317 and K318 each contribute to the UDP-N-acetyl-alpha-D-mannosaminouronate site. R325 contributes to the NAD(+) binding site. K403 contributes to the UDP-N-acetyl-alpha-D-mannosaminouronate binding site.

The protein belongs to the UDP-glucose/GDP-mannose dehydrogenase family. Homotetramer; probably dimer of dimers.

The enzyme catalyses UDP-N-acetyl-alpha-D-mannosamine + 2 NAD(+) + H2O = UDP-N-acetyl-alpha-D-mannosaminouronate + 2 NADH + 3 H(+). Its function is as follows. Catalyzes the four-electron oxidation of UDP-N-acetyl-D-mannosamine (UDP-ManNAc), reducing NAD(+) and releasing UDP-N-acetylmannosaminuronic acid (UDP-ManNAcA). This is UDP-N-acetyl-D-mannosamine dehydrogenase (wecC) from Methanocaldococcus jannaschii (strain ATCC 43067 / DSM 2661 / JAL-1 / JCM 10045 / NBRC 100440) (Methanococcus jannaschii).